The following is a 134-amino-acid chain: Putative integral membrane protein YxzK (134 aa).

4 helical membrane passes run 3 to 23 (VIRI…GEAI), 35 to 55 (IVGL…VSII), 58 to 78 (GAGF…TGVI), and 89 to 109 (LMLL…AGFA).

It is found in the cell membrane. The polypeptide is Putative integral membrane protein YxzK (yxzK) (Bacillus subtilis (strain 168)).